The sequence spans 348 residues: Uroporphyrinogen decarboxylase (348 aa).

Substrate is bound by residues 27–31 (RQAGR), Phe-46, Asp-76, Tyr-152, Ser-207, and His-320.

This sequence belongs to the uroporphyrinogen decarboxylase family. As to quaternary structure, homodimer.

It is found in the cytoplasm. The enzyme catalyses uroporphyrinogen III + 4 H(+) = coproporphyrinogen III + 4 CO2. It participates in porphyrin-containing compound metabolism; protoporphyrin-IX biosynthesis; coproporphyrinogen-III from 5-aminolevulinate: step 4/4. Its function is as follows. Catalyzes the decarboxylation of four acetate groups of uroporphyrinogen-III to yield coproporphyrinogen-III. The sequence is that of Uroporphyrinogen decarboxylase from Bacillus mycoides (strain KBAB4) (Bacillus weihenstephanensis).